We begin with the raw amino-acid sequence, 385 residues long: 8-amino-7-oxononanoate synthase (385 aa).

Arg27 serves as a coordination point for substrate. 105-106 (GY) contacts pyridoxal 5'-phosphate. His130 provides a ligand contact to substrate. Pyridoxal 5'-phosphate is bound by residues Ser176, 201–204 (DEAH), and 232–235 (TMSK). Position 235 is an N6-(pyridoxal phosphate)lysine (Lys235). Thr345 contributes to the substrate binding site.

This sequence belongs to the class-II pyridoxal-phosphate-dependent aminotransferase family. BioF subfamily. Homodimer. Requires pyridoxal 5'-phosphate as cofactor.

It catalyses the reaction 6-carboxyhexanoyl-[ACP] + L-alanine + H(+) = (8S)-8-amino-7-oxononanoate + holo-[ACP] + CO2. It participates in cofactor biosynthesis; biotin biosynthesis. Its function is as follows. Catalyzes the decarboxylative condensation of pimeloyl-[acyl-carrier protein] and L-alanine to produce 8-amino-7-oxononanoate (AON), [acyl-carrier protein], and carbon dioxide. The sequence is that of 8-amino-7-oxononanoate synthase from Mycobacterium leprae (strain Br4923).